The following is a 647-amino-acid chain: Acetyl-coenzyme A synthetase (647 aa).

CoA-binding positions include 190–193 (RGGK), Thr-310, and Asn-334. ATP-binding positions include 386–388 (GEP), 410–415 (DTWWQT), Asp-499, and Arg-514. Position 522 (Ser-522) interacts with CoA. Arg-525 contributes to the ATP binding site. The Mg(2+) site is built by Val-536, His-538, and Val-541. Arg-583 provides a ligand contact to CoA. Lys-608 is modified (N6-acetyllysine).

The protein belongs to the ATP-dependent AMP-binding enzyme family. Requires Mg(2+) as cofactor. Post-translationally, acetylated. Deacetylation by the SIR2-homolog deacetylase activates the enzyme.

The catalysed reaction is acetate + ATP + CoA = acetyl-CoA + AMP + diphosphate. Catalyzes the conversion of acetate into acetyl-CoA (AcCoA), an essential intermediate at the junction of anabolic and catabolic pathways. AcsA undergoes a two-step reaction. In the first half reaction, AcsA combines acetate with ATP to form acetyl-adenylate (AcAMP) intermediate. In the second half reaction, it can then transfer the acetyl group from AcAMP to the sulfhydryl group of CoA, forming the product AcCoA. In Xanthomonas campestris pv. campestris (strain 8004), this protein is Acetyl-coenzyme A synthetase.